Reading from the N-terminus, the 742-residue chain is Feeding circuit activating peptides (742 aa).

Residues 1-22 form the signal peptide; sequence MTFAASFRALLCVLFCAALVHC. The propeptide occupies 23-98; the sequence is KTRTKRYVPH…YGALADRDVD (76 aa). The propeptide at 117 to 131 is connecting peptide; that stretch reads GSLDAIPQDTDASSD. 20 consecutive propeptides follow at residues 164–168, 202–220, 236–253, 271–275, 293–297, 315–321, 339–341, 359–366, 384–388, 406–410, 428–432, 450–454, 472–476, 494–498, 516–520, 538–542, 560–564, 582–592, 610–614, and 647–742; these read GSGAE, RGTG…PWGS, DTEL…TEVN, SGEAG, ADDQG, FDNSAGE, AGD, FDNDISGQ, SDQDN, ADDDG, ADEDD, GDEDD, SDEDD, NSPGL, NNEYYSGAENE, DQPGE, and NSAD…AGQM.

In terms of tissue distribution, expressed in pleural, pedal, abdominal, buccal and cerebral ganglia.

The protein resides in the secreted. Initiates organized rhythmic motor output of feeding circuit. This is Feeding circuit activating peptides from Aplysia californica (California sea hare).